Reading from the N-terminus, the 176-residue chain is Sigma intracellular receptor 2 (176 aa).

Residues 1–9 lie on the Cytoplasmic side of the membrane; it reads MGAPATRRC. The helical transmembrane segment at 10–30 threads the bilayer; the sequence is VEWLLGLYFLSHIPITLFMDL. The EXPERA domain occupies 10–158; the sequence is VEWLLGLYFL…PYLLIPFILL (149 aa). Residues 31–68 are Lumenal-facing; the sequence is QAVLPRELYPVEFRNLLKWYAKEFKDPLLQEPPAWFKS. Residues 69-89 traverse the membrane as a helical segment; the sequence is FLFCELVFQLPFFPIATYAFL. Cholesterol contacts are provided by valine 75 and glutamine 77. Residues 90-99 are Cytoplasmic-facing; it reads KGSCKWIRTP. A helical membrane pass occupies residues 100-120; it reads AIIYSVHTMTTLIPILSTFLF. Residues 108–176 form a required for interaction with Hst1/HTN1 region; sequence MTTLIPILST…YKYEEKRKKK (69 aa). At 121 to 140 the chain is on the lumenal side; that stretch reads EDFSKASGFKGQRPETLHER. The helical transmembrane segment at 141–161 threads the bilayer; sequence LTLVSVYAPYLLIPFILLIFM. The Cytoplasmic portion of the chain corresponds to 162-176; that stretch reads LRSPYYKYEEKRKKK. Residues 172-176 carry the ER retention motif motif; sequence KRKKK.

It belongs to the TMEM97/sigma-2 receptor family. As to quaternary structure, homodimer. Interacts with NPC1; the interaction impairs NPC1-mediated cholesterol transport. Interacts with PGRMC1 and LDLR; the interaction increases LDL internalization. Interacts with histatin 1/HTN1; the interaction induces HTN1-stimulating wound healing. Interacts with TSPO. Forms a complex with TSPO and PGRMC1; the interaction occurs in MIA PaCa-2 cells but not in MCF7 cells. As to expression, widely expressed in normal tissues. Expressed in pancreatic, renal, breast, colon, ovarian surface epithelial (OSE) cells. Highly expressed in various proliferating cancer cells.

Its subcellular location is the rough endoplasmic reticulum membrane. It is found in the nucleus membrane. Sigma-2 receptor which contributes to ameliorate dysfunctional cellular processes and slow degenerative progression by regulating cell functions including cholesterol biosynthesis/trafficking, membrane trafficking, autophagy, lipid membrane-bound protein trafficking, and receptor stabilization at the cell surface. Forms a ternary complex with PGRMC1 receptor and low density lipoprotein receptor/LDLR at the plasma membrane, which increases LDLR-mediated LDL cholesterol internalization. Decreases lysosomal sterol transporter NPC1 availability to the cell, probably through NPC1-binding, hence controlling lipid transport, including cholesterol and LBPA, outside of late endosome/lysosome. Binds regio- and stereoselective ligand 20(S)-hydroxycholesterol (20(S)-OHC) which enhances TMEM97-NPC1 interaction and decreases TMEM97-PGRMC1 and TMEM97-TSPO interactions, thereby linking OHC binding to cholesterol homeostasis. Also able to bind cholesterol. Binds histatin 1 (Hst 1)/HN1 salivary peptide at the ER membrane, which is critical for increasing mitochondria-ER contacts and stimulating Hst1 wound healing properties. May alter the activity of some cytochrome P450 proteins. Although shows homologies with sterol isomerases (EXPERA domain), not able to catalyze sterol isomerization. However, may act as sensors of these molecules. Acts as a quality control factor in the ER, promoting the proteolytic degradation of nonproductive and extramitochondrial precursor proteins in the ER membrane thus removing them from the ER surface. This Homo sapiens (Human) protein is Sigma intracellular receptor 2.